The primary structure comprises 199 residues: Recombination protein RecR (199 aa).

Residues 56–71 (CAVCGNIAEETQCRIC) form a C4-type zinc finger. The region spanning 79 to 174 (TVICVVEEPK…KVTRLASGLP (96 aa)) is the Toprim domain.

It belongs to the RecR family.

May play a role in DNA repair. It seems to be involved in an RecBC-independent recombinational process of DNA repair. It may act with RecF and RecO. This chain is Recombination protein RecR, found in Thermobifida fusca (strain YX).